The chain runs to 440 residues: Protein naked cuticle homolog 1 (440 aa).

Glycine 2 is lipidated: N-myristoyl glycine. The region spanning 129 to 164 is the EF-hand domain; that stretch reads EEDNRQEWTFTLYDFDNNGKVTREDITSLLHTIYEV. Positions 142, 144, 146, 148, and 153 each coordinate Ca(2+). The span at 192–204 shows a compositional bias: polar residues; it reads RWKNCTQTNTDTP. Disordered regions lie at residues 192 to 221, 272 to 379, and 421 to 440; these read RWKN…KTSE, AAPA…QRPK, and RHEH…FYQS. Positions 211 to 221 are enriched in basic and acidic residues; the sequence is EKCIEDSKTSE. Over residues 272–293 the composition is skewed to low complexity; that stretch reads AAPATEPAKPTHATRSSNQSRS. Positions 324–336 are enriched in basic residues; it reads RHTHALRSPKTHR. The span at 352–362 shows a compositional bias: pro residues; sequence APPPPSVPNQT. Residues 422–440 are compositionally biased toward basic residues; it reads HEHHHHHEHHHHYHHFYQS.

It belongs to the NKD family.

It is found in the cell membrane. The protein resides in the cytoplasm. Functionally, cell autonomous antagonist of the canonical Wnt signaling pathway. May activate a second Wnt signaling pathway that controls planar cell polarity. The protein is Protein naked cuticle homolog 1 (nkd1) of Danio rerio (Zebrafish).